The primary structure comprises 559 residues: Formate--tetrahydrofolate ligase (559 aa).

68–75 contacts ATP; sequence TPAGEGKT.

This sequence belongs to the formate--tetrahydrofolate ligase family.

The catalysed reaction is (6S)-5,6,7,8-tetrahydrofolate + formate + ATP = (6R)-10-formyltetrahydrofolate + ADP + phosphate. The protein operates within one-carbon metabolism; tetrahydrofolate interconversion. This Moorella thermoacetica (strain ATCC 39073 / JCM 9320) protein is Formate--tetrahydrofolate ligase.